Here is a 159-residue protein sequence, read N- to C-terminus: Adult-specific rigid cuticular protein 15.7 (159 aa).

The region spanning 23–89 is the Chitin-binding type R&amp;R domain; that stretch reads LGNYAFNYGI…SIKTNEPGTA (67 aa).

Its function is as follows. Component of the rigid cuticle of the spider. This chain is Adult-specific rigid cuticular protein 15.7, found in Araneus diadematus (European garden spider).